The chain runs to 393 residues: LL-diaminopimelate aminotransferase (393 aa).

Positions 14 and 41 each coordinate substrate. Residues Tyr-71, 104-105 (AK), Tyr-128, Asn-174, Tyr-205, and 233-235 (SFS) contribute to the pyridoxal 5'-phosphate site. Substrate-binding residues include Lys-105, Tyr-128, and Asn-174. Lys-236 is subject to N6-(pyridoxal phosphate)lysine. Pyridoxal 5'-phosphate is bound by residues Arg-244 and Asn-275. Substrate is bound by residues Asn-275 and Arg-369.

This sequence belongs to the class-I pyridoxal-phosphate-dependent aminotransferase family. LL-diaminopimelate aminotransferase subfamily. In terms of assembly, homodimer. Requires pyridoxal 5'-phosphate as cofactor.

It carries out the reaction (2S,6S)-2,6-diaminopimelate + 2-oxoglutarate = (S)-2,3,4,5-tetrahydrodipicolinate + L-glutamate + H2O + H(+). Its pathway is amino-acid biosynthesis; L-lysine biosynthesis via DAP pathway; LL-2,6-diaminopimelate from (S)-tetrahydrodipicolinate (aminotransferase route): step 1/1. Functionally, involved in the synthesis of meso-diaminopimelate (m-DAP or DL-DAP), required for both lysine and peptidoglycan biosynthesis. Catalyzes the direct conversion of tetrahydrodipicolinate to LL-diaminopimelate. This chain is LL-diaminopimelate aminotransferase, found in Chlamydia muridarum (strain MoPn / Nigg).